The following is a 928-amino-acid chain: DNA mismatch repair protein MutS (928 aa).

613-620 is a binding site for ATP; sequence GPNMAGKS. Residues 854–872 show a composition bias toward basic and acidic residues; sequence KAKSNKDDHRIDEKTENSS. The interval 854 to 880 is disordered; that stretch reads KAKSNKDDHRIDEKTENSSKKHKNKDS.

The protein belongs to the DNA mismatch repair MutS family.

Its function is as follows. This protein is involved in the repair of mismatches in DNA. It is possible that it carries out the mismatch recognition step. This protein has a weak ATPase activity. This chain is DNA mismatch repair protein MutS, found in Clostridium beijerinckii (strain ATCC 51743 / NCIMB 8052) (Clostridium acetobutylicum).